A 505-amino-acid polypeptide reads, in one-letter code: Cytochrome P450 9b1 (505 aa).

Cysteine 449 contacts heme.

This sequence belongs to the cytochrome P450 family. Heme is required as a cofactor.

The protein localises to the endoplasmic reticulum membrane. The protein resides in the microsome membrane. Its function is as follows. May be involved in the metabolism of insect hormones and in the breakdown of synthetic insecticides. The protein is Cytochrome P450 9b1 (Cyp9b1) of Drosophila melanogaster (Fruit fly).